A 39-amino-acid chain; its full sequence is uncharacterized protein (39 aa).

A signal peptide spans 1–21; sequence MHLRSRWWLALLYCKDPVSRS.

This is an uncharacterized protein from Saccharomyces cerevisiae (strain ATCC 204508 / S288c) (Baker's yeast).